The following is a 393-amino-acid chain: Mitogen-activated protein kinase 10 (393 aa).

The Protein kinase domain maps to 60–345 (KPPIRPIGRG…VKEALAHPYL (286 aa)). Residues 66-74 (IGRGACGIV) and lysine 89 contribute to the ATP site. Aspartate 186 serves as the catalytic Proton acceptor. Threonine 218 is subject to Phosphothreonine. The TXY motif lies at 218-220 (TEY). Position 220 is a phosphotyrosine (tyrosine 220). Threonine 223 bears the Phosphothreonine mark.

It belongs to the protein kinase superfamily. CMGC Ser/Thr protein kinase family. MAP kinase subfamily. Interacts with MKK2. Dually phosphorylated on Thr-218 and Tyr-220, which activates the enzyme.

It catalyses the reaction L-seryl-[protein] + ATP = O-phospho-L-seryl-[protein] + ADP + H(+). The enzyme catalyses L-threonyl-[protein] + ATP = O-phospho-L-threonyl-[protein] + ADP + H(+). Activated by threonine and tyrosine phosphorylation. This chain is Mitogen-activated protein kinase 10 (MPK10), found in Arabidopsis thaliana (Mouse-ear cress).